A 454-amino-acid chain; its full sequence is Probable ECA polymerase (454 aa).

The next 11 helical transmembrane spans lie at 3–23 (LGQF…ILTL), 39–59 (FSML…MLVF), 61–81 (FGVA…ATAF), 119–139 (LALV…FLLF), 154–174 (GVAL…VYFL), 180–200 (AWFF…VIVG), 201–221 (GTRA…IVRG), 222–242 (WITL…MFWL), 340–360 (LVVM…GLII), 377–397 (YKAA…IVLA), and 409–429 (VFFC…YWLF).

This sequence belongs to the WzyE family. As to quaternary structure, probably part of a complex composed of WzxE, WzyE and WzzE.

The protein localises to the cell inner membrane. Its pathway is bacterial outer membrane biogenesis; enterobacterial common antigen biosynthesis. In terms of biological role, probably involved in the polymerization of enterobacterial common antigen (ECA) trisaccharide repeat units. The polypeptide is Probable ECA polymerase (Yersinia pseudotuberculosis serotype O:1b (strain IP 31758)).